The sequence spans 2180 residues: Genome polyprotein (2180 aa).

Disordered regions lie at residues 507–529 (DGADHTPKIPKRNVVLPSGAKDP), 624–679 (QPQK…YPIQ), 703–809 (KRAK…NTLP), and 822–848 (SEVEDEVDGMTEEPIPERRPEITPPKM). Residues 573–624 (SKNQGLIRVLEQQLQDLNKRICPPGTSLFHFFDQQKSEMASLKEQIRLLKEQ) are a coiled coil. 2 stretches are compositionally biased toward polar residues: residues 631–643 (DTPSYQSSYQPFH) and 670–679 (PSLFSQYPIQ). A compositionally biased stretch (basic and acidic residues) spans 703–716 (KRAKKKLQKDEVKQ). Positions 759-771 (SEDTSSQSYISTE) are enriched in polar residues. Residues 784-807 (SEESTQLSQLSSSSNDSPENNENT) are compositionally biased toward low complexity. A compositionally biased stretch (acidic residues) spans 822–832 (SEVEDEVDGMT). Residues 1113-1126 (CFTCGKIGHFSRNC) form a CCHC-type zinc finger. The active-site For protease activity; shared with dimeric partner is Asp1227. Positions 1480, 1543, and 1544 each coordinate Mg(2+). 3 disordered regions span residues 1824–1848 (RRTRSNSTKSKADSSQSTGSSYKLS), 2115–2145 (NIVKNSPRKRKGKAKSKSSTRNEKRRAKNKC), and 2161–2180 (YSTKPSTPSWTQDSSSEPCI). A compositionally biased stretch (polar residues) spans 1828 to 1847 (SNSTKSKADSSQSTGSSYKL). Over residues 2120–2145 (SPRKRKGKAKSKSSTRNEKRRAKNKC) the composition is skewed to basic residues. Residues 2163-2180 (TKPSTPSWTQDSSSEPCI) show a composition bias toward polar residues.

It belongs to the Petuviruses genome polyprotein family.

The catalysed reaction is DNA(n) + a 2'-deoxyribonucleoside 5'-triphosphate = DNA(n+1) + diphosphate. In terms of biological role, encodes presumably for at least four polypeptides: Movement protein (MP), capsid protein (CP), Protease (PR), and reverse transcriptase (RT). The sequence is that of Genome polyprotein from Petunia (PVCV).